Reading from the N-terminus, the 252-residue chain is Probable endonuclease 4 (252 aa).

Residues His-56, His-96, Glu-129, Asp-162, His-165, His-191, Asp-204, His-206, and Glu-233 each coordinate Zn(2+).

It belongs to the AP endonuclease 2 family. The cofactor is Zn(2+).

It carries out the reaction Endonucleolytic cleavage to 5'-phosphooligonucleotide end-products.. Functionally, endonuclease IV plays a role in DNA repair. It cleaves phosphodiester bonds at apurinic or apyrimidinic (AP) sites, generating a 3'-hydroxyl group and a 5'-terminal sugar phosphate. This is Probable endonuclease 4 from Mycobacterium tuberculosis (strain ATCC 25177 / H37Ra).